The sequence spans 497 residues: mRNA cleavage and polyadenylation factor CLP1 (497 aa).

Residues glutamate 34, lysine 73, and 157 to 162 each bind ATP; that span reads HSGKTS.

This sequence belongs to the Clp1 family. Clp1 subfamily. In terms of assembly, component of a pre-mRNA cleavage factor complex. Interacts directly with PCF11.

Its subcellular location is the nucleus. Its function is as follows. Required for endonucleolytic cleavage during polyadenylation-dependent pre-mRNA 3'-end formation. The polypeptide is mRNA cleavage and polyadenylation factor CLP1 (Debaryomyces hansenii (strain ATCC 36239 / CBS 767 / BCRC 21394 / JCM 1990 / NBRC 0083 / IGC 2968) (Yeast)).